Consider the following 424-residue polypeptide: GTPase Obg (424 aa).

The Obg domain maps to 1-158; the sequence is MFIDTAKIFV…RWIKLELKLL (158 aa). The 173-residue stretch at 159–331 folds into the OBG-type G domain; that stretch reads ADVGLIGFPN…LMKEAARLLS (173 aa). GTP-binding positions include 165-172, 190-194, 212-215, 282-285, and 312-314; these read GFPNVGKS, FTTLK, DIPG, NKSD, and SAA. Mg(2+) contacts are provided by serine 172 and threonine 192. In terms of domain architecture, OCT spans 345–424; sequence RFIEEEKRFT…LNDFEFDFLL (80 aa).

Belongs to the TRAFAC class OBG-HflX-like GTPase superfamily. OBG GTPase family. As to quaternary structure, monomer. Requires Mg(2+) as cofactor.

Its subcellular location is the cytoplasm. An essential GTPase which binds GTP, GDP and possibly (p)ppGpp with moderate affinity, with high nucleotide exchange rates and a fairly low GTP hydrolysis rate. Plays a role in control of the cell cycle, stress response, ribosome biogenesis and in those bacteria that undergo differentiation, in morphogenesis control. In Clostridium botulinum (strain Langeland / NCTC 10281 / Type F), this protein is GTPase Obg.